A 45-amino-acid polypeptide reads, in one-letter code: Large ribosomal subunit protein bL36 (45 aa).

The tract at residues 26–45 is disordered; it reads VINKKDPNRKQRQKGPARKK. The segment covering 35–45 has biased composition (basic residues); that stretch reads KQRQKGPARKK.

The protein belongs to the bacterial ribosomal protein bL36 family.

The sequence is that of Large ribosomal subunit protein bL36 from Protochlamydia amoebophila (strain UWE25).